Reading from the N-terminus, the 126-residue chain is Small ribosomal subunit protein uS13 (126 aa).

Residues 94 to 126 (GLPVRGQKTRNNAHTVKGKPKAAIAGKKKNKVN) form a disordered region. Residues 109 to 126 (VKGKPKAAIAGKKKNKVN) show a composition bias toward basic residues.

The protein belongs to the universal ribosomal protein uS13 family. In terms of assembly, part of the 30S ribosomal subunit. Forms a loose heterodimer with protein S19. Forms two bridges to the 50S subunit in the 70S ribosome.

Its function is as follows. Located at the top of the head of the 30S subunit, it contacts several helices of the 16S rRNA. In the 70S ribosome it contacts the 23S rRNA (bridge B1a) and protein L5 of the 50S subunit (bridge B1b), connecting the 2 subunits; these bridges are implicated in subunit movement. Contacts the tRNAs in the A and P-sites. The chain is Small ribosomal subunit protein uS13 from Aster yellows witches'-broom phytoplasma (strain AYWB).